Reading from the N-terminus, the 830-residue chain is Leucine--tRNA ligase (830 aa).

Positions 34-44 (PYPSGNIHMGH) match the 'HIGH' region motif. Residues 592–596 (KMSKS) carry the 'KMSKS' region motif. Residue Lys-595 coordinates ATP.

The protein belongs to the class-I aminoacyl-tRNA synthetase family.

It localises to the cytoplasm. The catalysed reaction is tRNA(Leu) + L-leucine + ATP = L-leucyl-tRNA(Leu) + AMP + diphosphate. The chain is Leucine--tRNA ligase from Ehrlichia ruminantium (strain Welgevonden).